Consider the following 331-residue polypeptide: Probable allantoicase (331 aa).

It belongs to the allantoicase family.

It carries out the reaction allantoate + H2O = (S)-ureidoglycolate + urea. The protein operates within nitrogen metabolism; (S)-allantoin degradation; (S)-ureidoglycolate from allantoate (aminidohydrolase route): step 1/1. This chain is Probable allantoicase, found in Pseudomonas fluorescens (strain ATCC BAA-477 / NRRL B-23932 / Pf-5).